A 36-amino-acid polypeptide reads, in one-letter code: Mu-agatoxin-Aa1a (36 aa).

Disulfide bonds link Cys2–Cys17, Cys9–Cys22, Cys16–Cys32, and Cys24–Cys30. Asn36 is modified (asparagine amide).

It belongs to the neurotoxin 07 (Beta/delta-agtx) family. 04 (aga-5) subfamily. As to expression, expressed by the venom gland.

Its subcellular location is the secreted. Insecticidal neurotoxin that induces an irreversible spastic paralysis when injected into insects. Modifies presynaptic voltage-gated sodium channels (Nav), causing them to open at the normal resting potential of the nerve. This leads to spontaneous release of neurotransmitter and repetitive action potentials in motor neurons. This Agelenopsis aperta (North American funnel-web spider) protein is Mu-agatoxin-Aa1a.